Reading from the N-terminus, the 77-residue chain is Large ribosomal subunit protein bL31 (77 aa).

Belongs to the bacterial ribosomal protein bL31 family. Type A subfamily. Part of the 50S ribosomal subunit.

Binds the 23S rRNA. This Paramagnetospirillum magneticum (strain ATCC 700264 / AMB-1) (Magnetospirillum magneticum) protein is Large ribosomal subunit protein bL31.